A 518-amino-acid chain; its full sequence is Ankyrin repeat and SOCS box protein 3 (518 aa).

ANK repeat units lie at residues 9-38 (DTCS…SVDV), 42-71 (RGWM…SENY), 78-107 (EGFC…DPNA), 111-140 (EETT…NVNG), 145-174 (CGWN…NKEC), 178-207 (FGIT…NVNC), 211-240 (DKAT…DPDL), 246-275 (SWQL…RACD), 279-308 (NKVS…SPDA), 315-346 (GFSS…QINE), and 348-373 (HLAY…SLGP). Residues 441 to 504 (MLSARASNAW…HNYLLYEDVL (64 aa)) enclose the SOCS box domain.

It belongs to the ankyrin SOCS box (ASB) family. Interacts with ELOB and TNFRSF1B.

It localises to the cytoplasm. It participates in protein modification; protein ubiquitination. Probable substrate-recognition component of a SCF-like ECS (Elongin-Cullin-SOCS-box protein) E3 ubiquitin-protein ligase complex which mediates the ubiquitination and subsequent proteasomal degradation of target proteins. Recognizes TNFRSF1B. Plays a role in the down-regulation of antiviral innate immunity by targeting MAVS for ubiquitin-proteasomal degradation. Also destabilizes TRAF6 by enhancing its 'Lys-48'-linked polyubiquitination. The sequence is that of Ankyrin repeat and SOCS box protein 3 (ASB3) from Homo sapiens (Human).